The following is a 342-amino-acid chain: Cathepsin B-like cysteine proteinase 1 (342 aa).

The signal sequence occupies residues 1 to 18 (MKYLVLALCTYLCSQTGA). Positions 19-86 (DENAAQGIPL…VKEDPDPEVD (68 aa)) are cleaved as a propeptide — activation peptide. N-linked (GlcNAc...) asparagine glycosylation is present at Asn-99. Intrachain disulfides connect Cys-100–Cys-128, Cys-111–Cys-156, Cys-147–Cys-214, Cys-148–Cys-152, Cys-185–Cys-218, and Cys-193–Cys-205. The active site involves Cys-114. Asn-138 carries N-linked (GlcNAc...) asparagine glycosylation. Asn-198 is a glycosylation site (N-linked (GlcNAc...) asparagine). The active site involves His-285. Residue Asn-296 is glycosylated (N-linked (GlcNAc...) asparagine). Asn-305 is an active-site residue.

Belongs to the peptidase C1 family.

Expression of the protease correlates with blood-feeding and suggests a role for the protease in blood digestion. The protein is Cathepsin B-like cysteine proteinase 1 (AC-1) of Haemonchus contortus (Barber pole worm).